A 252-amino-acid chain; its full sequence is Ubiquinone biosynthesis O-methyltransferase (252 aa).

S-adenosyl-L-methionine-binding residues include Arg-45, Gly-76, Asp-97, and Met-141.

It belongs to the methyltransferase superfamily. UbiG/COQ3 family.

It catalyses the reaction a 3-demethylubiquinol + S-adenosyl-L-methionine = a ubiquinol + S-adenosyl-L-homocysteine + H(+). The catalysed reaction is a 3-(all-trans-polyprenyl)benzene-1,2-diol + S-adenosyl-L-methionine = a 2-methoxy-6-(all-trans-polyprenyl)phenol + S-adenosyl-L-homocysteine + H(+). Its pathway is cofactor biosynthesis; ubiquinone biosynthesis. Functionally, O-methyltransferase that catalyzes the 2 O-methylation steps in the ubiquinone biosynthetic pathway. This Caulobacter sp. (strain K31) protein is Ubiquinone biosynthesis O-methyltransferase.